Here is a 250-residue protein sequence, read N- to C-terminus: MTTEVILHYRPCESDPTQLPKIAEKAIQDFPTRPLSRFIPWFPYDGSKLPLRPKRSPPVISEEAAEDVKQYLTISEHDAKSHSYDCTVDLLEFQPSLKKQHLTWSHTLKEQTNSGNLGKQSEKGKQHKRRSWSISLPSNNCTKNVSPLSKKLQDSLKALNLHSLYRARWTIEHTICNSQTLEDIWTKLNQIIRHNELPSCNATIQRHLGQIWVFCDIMYCEYVGSLLKGRLALTGKINLFVHKYGVIFSM.

The tract at residues 28–83 (QDFPTRPLSRFIPWFPYDGSKLPLRPKRSPPVISEEAAEDVKQYLTISEHDAKSHS) is sufficient for interaction with MAD2L2. Positions 108–119 (LKEQTNSGNLGK) are enriched in polar residues. The tract at residues 108–129 (LKEQTNSGNLGKQSEKGKQHKR) is disordered.

In terms of assembly, component of the shieldin complex, consisting of SHLD1, SHLD2, SHLD3 and MAD2L2/REV7. Within the complex, SHLD2 forms a scaffold which interacts with a SHLD3-MAD2L2 subcomplex via its N-terminus, and with SHLD1 via its C-terminus. Interacts with ASTE1.

Its subcellular location is the chromosome. Component of the shieldin complex, which plays an important role in repair of DNA double-stranded breaks (DSBs). During G1 and S phase of the cell cycle, the complex functions downstream of TP53BP1 to promote non-homologous end joining (NHEJ) and suppress DNA end resection. Mediates various NHEJ-dependent processes including immunoglobulin class-switch recombination, and fusion of unprotected telomeres. The chain is Shieldin complex subunit 3 from Homo sapiens (Human).